A 1429-amino-acid polypeptide reads, in one-letter code: Autophagy-related protein 11 (1429 aa).

Residues 71 to 99 (TQRSQPGASSPPLSELPLPRYNAHTPPNS) form a disordered region. Residues 80–89 (SPPLSELPLP) show a composition bias toward low complexity. 4 coiled-coil regions span residues 143 to 173 (VMLR…KEWS), 553 to 590 (DDLL…QTQA), 632 to 815 (LETL…LEDI), and 851 to 989 (EGDM…RLES). The tract at residues 1024–1061 (DGTMHIQRTPRSERSLATTANPNDSDPSSSLRRSSTLN) is disordered. Positions 1042-1061 (TANPNDSDPSSSLRRSSTLN) are enriched in low complexity. The stretch at 1105 to 1143 (ADAVYRRVKDVEHMARKLQREARAYREKAHSFQKEAHDK) forms a coiled coil. The span at 1209 to 1229 (SKSLQHDQAGETRKDGARGET) shows a compositional bias: basic and acidic residues. 2 disordered regions span residues 1209-1241 (SKSL…DNPF) and 1336-1429 (SSRG…LIGP). Residues 1230–1239 (ESLDDDENDN) are compositionally biased toward acidic residues. Polar residues-rich tracts occupy residues 1345–1372 (ASET…QHMS) and 1383–1393 (QETPQQTNSIS).

Belongs to the ATG11 family. In terms of assembly, homodimer.

The protein localises to the preautophagosomal structure membrane. It localises to the vacuole membrane. In terms of biological role, involved in cytoplasm to vacuole transport (Cvt), pexophagy, mitophagy and nucleophagy. Recruits mitochondria for their selective degradation via autophagy (mitophagy) during starvation. Works as scaffold proteins that recruit ATG proteins to the pre-autophagosome (PAS), the site of vesicle/autophagosome formation. Required for the Cvt vesicles completion. The protein is Autophagy-related protein 11 (apg-8) of Neurospora crassa (strain ATCC 24698 / 74-OR23-1A / CBS 708.71 / DSM 1257 / FGSC 987).